The sequence spans 294 residues: UPF0761 membrane protein YPK_4186 (294 aa).

The next 7 helical transmembrane spans lie at 44 to 64 (LLSL…FPMF), 67 to 87 (ISIK…GDII), 108 to 128 (GLIV…NIIW), 136 to 156 (LVFS…LVGA), 185 to 205 (VFPL…VPTV), 212 to 232 (ALIG…GFAM), and 246 to 266 (VLAV…IVLL).

Belongs to the UPF0761 family.

The protein localises to the cell inner membrane. This is UPF0761 membrane protein YPK_4186 from Yersinia pseudotuberculosis serotype O:3 (strain YPIII).